Here is a 448-residue protein sequence, read N- to C-terminus: Homogentisate 1,2-dioxygenase (448 aa).

His-303 serves as the catalytic Proton acceptor. Residues His-346 and Glu-352 each contribute to the Fe cation site. Residues Tyr-361 and His-382 each coordinate homogentisate. Position 382 (His-382) interacts with Fe cation.

This sequence belongs to the homogentisate dioxygenase family. Hexamer; dimer of trimers. Fe cation serves as cofactor.

It carries out the reaction homogentisate + O2 = 4-maleylacetoacetate + H(+). Its pathway is amino-acid degradation; L-phenylalanine degradation; acetoacetate and fumarate from L-phenylalanine: step 4/6. Functionally, involved in the catabolism of homogentisate (2,5-dihydroxyphenylacetate or 2,5-OH-PhAc), a central intermediate in the degradation of phenylalanine and tyrosine. Catalyzes the oxidative ring cleavage of the aromatic ring of homogentisate to yield maleylacetoacetate. In Rhodopseudomonas palustris (strain BisB18), this protein is Homogentisate 1,2-dioxygenase.